A 367-amino-acid chain; its full sequence is Otolith matrix protein 1 (367 aa).

The signal sequence occupies residues 1–23 (MDRLDRRLAATLLLFSFISFSTQ). Residues 27-363 (ISWCVVSEAE…YTTVLQAFEC (337 aa)) enclose the Transferrin-like domain.

The protein belongs to the transferrin family. Interacts with OTOL1. In terms of tissue distribution, expressed in the sacculus during the day.

It localises to the secreted. Functionally, required for normal otolith growth and deposition of otolin-1 in the otolith. This Oncorhynchus mykiss (Rainbow trout) protein is Otolith matrix protein 1 (otomp).